Here is a 128-residue protein sequence, read N- to C-terminus: Ribosome-binding factor A (128 aa).

Belongs to the RbfA family. Monomer. Binds 30S ribosomal subunits, but not 50S ribosomal subunits or 70S ribosomes.

The protein resides in the cytoplasm. Functionally, one of several proteins that assist in the late maturation steps of the functional core of the 30S ribosomal subunit. Associates with free 30S ribosomal subunits (but not with 30S subunits that are part of 70S ribosomes or polysomes). Required for efficient processing of 16S rRNA. May interact with the 5'-terminal helix region of 16S rRNA. This is Ribosome-binding factor A from Idiomarina loihiensis (strain ATCC BAA-735 / DSM 15497 / L2-TR).